Here is a 170-residue protein sequence, read N- to C-terminus: uncharacterized protein (170 aa).

The signal sequence occupies residues 1–26 (MLKKKWMVGLLAGCLAAGGFSYNAFA).

This is an uncharacterized protein from Bacillus subtilis (strain 168).